The chain runs to 250 residues: 3-deoxy-manno-octulosonate cytidylyltransferase (250 aa).

It belongs to the KdsB family.

It is found in the cytoplasm. It catalyses the reaction 3-deoxy-alpha-D-manno-oct-2-ulosonate + CTP = CMP-3-deoxy-beta-D-manno-octulosonate + diphosphate. Its pathway is nucleotide-sugar biosynthesis; CMP-3-deoxy-D-manno-octulosonate biosynthesis; CMP-3-deoxy-D-manno-octulosonate from 3-deoxy-D-manno-octulosonate and CTP: step 1/1. The protein operates within bacterial outer membrane biogenesis; lipopolysaccharide biosynthesis. In terms of biological role, activates KDO (a required 8-carbon sugar) for incorporation into bacterial lipopolysaccharide in Gram-negative bacteria. The protein is 3-deoxy-manno-octulosonate cytidylyltransferase of Legionella pneumophila (strain Corby).